We begin with the raw amino-acid sequence, 511 residues long: 2,3-bisphosphoglycerate-independent phosphoglycerate mutase (511 aa).

Aspartate 12 is a binding site for Mn(2+). Tyrosine 36 is subject to Phosphotyrosine. Serine 62 is a binding site for Mn(2+). Serine 62 acts as the Phosphoserine intermediate in catalysis. Residues histidine 123, 153-154 (RD), arginine 185, arginine 191, 261-264 (RPDR), and lysine 336 each bind substrate. Residues aspartate 403, histidine 407, aspartate 444, histidine 445, and histidine 462 each contribute to the Mn(2+) site.

The protein belongs to the BPG-independent phosphoglycerate mutase family. As to quaternary structure, monomer. It depends on Mn(2+) as a cofactor.

The catalysed reaction is (2R)-2-phosphoglycerate = (2R)-3-phosphoglycerate. The protein operates within carbohydrate degradation; glycolysis; pyruvate from D-glyceraldehyde 3-phosphate: step 3/5. Functionally, essential for rapid growth and for sporulation. Catalyzes the interconversion of 2-phosphoglycerate and 3-phosphoglycerate. The protein is 2,3-bisphosphoglycerate-independent phosphoglycerate mutase of Bacillus licheniformis (strain ATCC 14580 / DSM 13 / JCM 2505 / CCUG 7422 / NBRC 12200 / NCIMB 9375 / NCTC 10341 / NRRL NRS-1264 / Gibson 46).